Here is a 202-residue protein sequence, read N- to C-terminus: MNFLRKIVRGCRDEEDQKPALVSAPPDDDDLWLPPPEYVPLTEITGRKNMRNFCVNGEVKVCSPNGYSFKILRHILRSFDGVYSGNQRMRGLVKVVIGLALSGGPIPEGMNWVYKVRRTLVFQWAESRGPLDGEELEYSQEITWDDDSEFVGSQIRVSARQCHIQGRIWCINMNSRACQLWSDMALKTQQSDEDRNTSLLLE.

The short motif at 35–38 is the PPXY motif element; sequence PPEY.

It belongs to the lyssavirus matrix protein family. As to quaternary structure, homomultimer. Interacts with nucleoprotein and with the cytoplasmic domain of glycoprotein.

The protein resides in the virion membrane. It is found in the host endomembrane system. Plays a major role in assembly and budding of virion. Completely covers the ribonucleoprotein coil and keep it in condensed bullet-shaped form. Inhibits viral transcription and stimulates replication. Plays a major role in early induction of TRAIL-mediated apoptosis in infected neurons. In Mammalia (EBLV2), this protein is Matrix protein (M).